The primary structure comprises 365 residues: Probable UDP-arabinopyranose mutase 1 (365 aa).

Positions 100 to 102 (DDD) match the DXD motif motif. Arg148 is a glycosylation site (N-linked (Glc...) arginine).

This sequence belongs to the RGP family. In terms of assembly, homopentamer or homohexamer. It depends on Mn(2+) as a cofactor. The cofactor is Mg(2+). Reversibly glycosylated by UDP-glucose, UDP-xylose and UDP-galactose, but not UDP-mannose. In terms of tissue distribution, expressed in all tissues tested, including root, tuber, leaf, petiole, shoot, stolon and stem.

The protein resides in the secreted. It localises to the cell wall. Its subcellular location is the cell junction. It is found in the plasmodesma. The protein localises to the golgi apparatus. It catalyses the reaction UDP-beta-L-arabinofuranose = UDP-beta-L-arabinopyranose. Probable UDP-L-arabinose mutase involved in the biosynthesis of cell wall non-cellulosic polysaccharides. Was initially shown to possess an autoglycosylating activity which is dependent on the presence of UDP-glucose and manganese. In Solanum tuberosum (Potato), this protein is Probable UDP-arabinopyranose mutase 1.